The chain runs to 315 residues: Acyl transferase (315 aa).

Catalysis depends on charge relay system residues Ser-116, Asp-213, and His-243.

It belongs to the LuxD family.

It functions in the pathway lipid metabolism; fatty acid reduction for biolumincescence. In terms of biological role, acyl transferase is part of the fatty acid reductase system required for aldehyde biosynthesis; it produces fatty acids for the luminescent reaction. The sequence is that of Acyl transferase from Photobacterium leiognathi.